Consider the following 218-residue polypeptide: Glutathione S-transferase Mu 1 (218 aa).

The GST N-terminal domain occupies 2 to 88 (PMILGYWDIR…YIARKHNLCG (87 aa)). 7 to 8 (YW) provides a ligand contact to glutathione. Thr34 carries the phosphothreonine modification. Glutathione-binding positions include 43–46 (RSQW), Lys50, 59–60 (NL), and 72–73 (QS). Residues 90 to 208 (TEEEKIRVDI…KSSRFLPRPV (119 aa)) form the GST C-terminal domain. Tyr116 provides a ligand contact to substrate. Phosphoserine is present on Ser210.

It belongs to the GST superfamily. Mu family. In terms of assembly, homodimer. As to expression, liver (at protein level).

Its subcellular location is the cytoplasm. It catalyses the reaction RX + glutathione = an S-substituted glutathione + a halide anion + H(+). The catalysed reaction is prostaglandin A2 + glutathione = prostaglandin A2-S-(R)-glutathione. It carries out the reaction prostaglandin J2 + glutathione = prostaglandin J2-S-(R)-glutathione. The enzyme catalyses prostaglandin J2 + glutathione = prostaglandin J2-S-(S)-glutathione. It catalyses the reaction prostaglandin A2 + glutathione = prostaglandin A2-S-(S)-glutathione. The catalysed reaction is 11(S)-hydroxy-14(S),15(S)-epoxy-(5Z,8Z,12E)-eicosatrienoate + glutathione = (11S,15S)-dihydroxy-14(R)-S-glutathionyl-(5Z,8Z,12E)-eicosatrienoate. Conjugation of reduced glutathione to a wide number of exogenous and endogenous hydrophobic electrophiles. Involved in the formation of glutathione conjugates of both prostaglandin A2 (PGA2) and prostaglandin J2 (PGJ2). Participates in the formation of novel hepoxilin regioisomers. This is Glutathione S-transferase Mu 1 from Homo sapiens (Human).